A 708-amino-acid chain; its full sequence is GID complex associated protein 12 (708 aa).

A compositionally biased stretch (low complexity) spans 381-396; that stretch reads SSRRNSSFSTASSEPR. The disordered stretch occupies residues 381 to 403; it reads SSRRNSSFSTASSEPRPLSRRRR.

As to quaternary structure, interacts with core components of the GID/CTLH ubiquitin ligase complex. GID12 binds both the substrate receptor GID4 and the tip of GID5 in the scaffolding module, sealing GID4 onto the scaffold.

Functionally, regulator of the GID E3 ligase complex. Modulates both assembly of the substrate receptor GID4 into the GID E3 ligase complex and its activity toward its substrates. GID12-binding remodels the N-degron binding pocket in the GID(SR4) complex, and could limit substrate accessibility of a bulky substrate to a ubiquitynation active site, thereby stabilizing gluconeogenic enzyme substrates. Involved in actin patch formation. The sequence is that of GID complex associated protein 12 from Saccharomyces cerevisiae (strain ATCC 204508 / S288c) (Baker's yeast).